The sequence spans 310 residues: Vomeronasal type-1 receptor 53 (310 aa).

The Extracellular segment spans residues 1-20 (MNKANLLHTDINLKITLFSE). The chain crosses the membrane as a helical span at residues 21-41 (VSVGISANSILIFAHLCMLLG). At 42–50 (ENRPKPIDL) the chain is on the cytoplasmic side. The helical transmembrane segment at 51–71 (YIAFFSLTQLMLLITMGLIAV) threads the bilayer. Residues 72–93 (DMFMPWGRWDSTTCQSLIYLHR) are Extracellular-facing. The cysteines at positions 85 and 172 are disulfide-linked. The helical transmembrane segment at 94–114 (LLRGLTLSATCLLNVLWTITL) threads the bilayer. The Cytoplasmic portion of the chain corresponds to 115 to 134 (SPRSSCLTKFKHKSLQHISC). The helical transmembrane segment at 135–155 (AFLFLCVLYMSFNSHLFISII) threads the bilayer. At 156–183 (AYPNLTLENFMYVTQSCSLIPLSYFRKS) the chain is on the extracellular side. An N-linked (GlcNAc...) asparagine glycan is attached at asparagine 159. Residues 184 to 204 (MFSIPMAIREALLIGLMALSG) traverse the membrane as a helical segment. Topologically, residues 205-238 (GYMVAHLWRHKKQAQHLHRTSLSSKASPEQRATR) are cytoplasmic. Residues 239–259 (TIMLLMSFFVVLYILDLVIFH) traverse the membrane as a helical segment. At 260-268 (SRMKFKDGS) the chain is on the extracellular side. Residues 269–289 (ILYGVQIIVSHSYATVSPFVF) traverse the membrane as a helical segment. The Cytoplasmic portion of the chain corresponds to 290–310 (ICTEKRITNFLRSMCGRIVNI).

This sequence belongs to the G-protein coupled receptor 1 family.

The protein localises to the cell membrane. Its function is as follows. Putative pheromone receptor implicated in the regulation of social and reproductive behavior. The polypeptide is Vomeronasal type-1 receptor 53 (Vmn1r53) (Mus musculus (Mouse)).